A 333-amino-acid chain; its full sequence is Glyoxylate reductase (333 aa).

NADP(+) is bound by residues Phe158–Ile161, Ser180–Ser182, and Ile239–Arg241. Residues Arg241 and Glu270 contribute to the active site. His288 (proton donor) is an active-site residue. Residue His288–Gly290 coordinates NADP(+).

This sequence belongs to the D-isomer specific 2-hydroxyacid dehydrogenase family. GyaR subfamily. Homodimer.

It localises to the cytoplasm. The enzyme catalyses glycolate + NAD(+) = glyoxylate + NADH + H(+). The sequence is that of Glyoxylate reductase from Thermococcus kodakarensis (strain ATCC BAA-918 / JCM 12380 / KOD1) (Pyrococcus kodakaraensis (strain KOD1)).